Reading from the N-terminus, the 149-residue chain is Large ribosomal subunit protein bL9 (149 aa).

This sequence belongs to the bacterial ribosomal protein bL9 family.

In terms of biological role, binds to the 23S rRNA. This chain is Large ribosomal subunit protein bL9, found in Salmonella agona (strain SL483).